The primary structure comprises 28 residues: Apolipoprotein C-I (28 aa).

The protein belongs to the apolipoprotein C1 family.

It is found in the secreted. In terms of biological role, inhibitor of lipoprotein binding to the low density lipoprotein (LDL) receptor, LDL receptor-related protein, and very low density lipoprotein (VLDL) receptor. Associates with high density lipoproteins (HDL) and the triacylglycerol-rich lipoproteins in the plasma and makes up about 10% of the protein of the VLDL and 2% of that of HDL. Appears to interfere directly with fatty acid uptake and is also the major plasma inhibitor of cholesteryl ester transfer protein (CETP). Binds free fatty acids and reduces their intracellular esterification. Modulates the interaction of APOE with beta-migrating VLDL and inhibits binding of beta-VLDL to the LDL receptor-related protein. The chain is Apolipoprotein C-I (APOC1) from Oryctolagus cuniculus (Rabbit).